The chain runs to 151 residues: MQEVTVYSDGACKGNPGLGGWGTVLVSGGHEKELFGGEAVTTNNRMELMAVIEAFRALKRPCRVKVYTDSQYVQKGISEWLAGWKARGWKTADKKPVKNDDLWRTLDELVVTHEVSWHWVKGHAGHPGNERADALANKGVEIARQAIQAGA.

The RNase H type-1 domain maps to methionine 1–glutamate 141. Mg(2+)-binding residues include aspartate 9, glutamate 47, aspartate 69, and aspartate 133.

This sequence belongs to the RNase H family. As to quaternary structure, monomer. Mg(2+) serves as cofactor.

Its subcellular location is the cytoplasm. The enzyme catalyses Endonucleolytic cleavage to 5'-phosphomonoester.. Functionally, endonuclease that specifically degrades the RNA of RNA-DNA hybrids. This Ralstonia nicotianae (strain ATCC BAA-1114 / GMI1000) (Ralstonia solanacearum) protein is Ribonuclease H.